Consider the following 209-residue polypeptide: MATVNVLNWKKEKVGSVELAADVFETPVKKEVLHTVVQWQLAARRQGTHMTKTKGLVSGGGKKPFKQKGTGGARQGSSRSILMPGGGTAFGPQPRSYAFVLPKKVRRLGLSMALSHLQKEGKLFIVDSMASEGKTAELNKRLQAFGLKKAVLVDSVVDDKFNRASKNLPTFKYFPVEGLNVFDLLKYDAAVITKDSVAKIVDRCSLEKA.

Residues 50 to 89 (MTKTKGLVSGGGKKPFKQKGTGGARQGSSRSILMPGGGTA) are disordered.

The protein belongs to the universal ribosomal protein uL4 family. In terms of assembly, part of the 50S ribosomal subunit.

One of the primary rRNA binding proteins, this protein initially binds near the 5'-end of the 23S rRNA. It is important during the early stages of 50S assembly. It makes multiple contacts with different domains of the 23S rRNA in the assembled 50S subunit and ribosome. In terms of biological role, forms part of the polypeptide exit tunnel. The protein is Large ribosomal subunit protein uL4 of Bdellovibrio bacteriovorus (strain ATCC 15356 / DSM 50701 / NCIMB 9529 / HD100).